Consider the following 474-residue polypeptide: Protein nucleotidyltransferase YdiU (474 aa).

The ATP site is built by glycine 89, glycine 91, arginine 92, lysine 112, aspartate 124, glycine 125, arginine 175, and arginine 182. Aspartate 256 serves as the catalytic Proton acceptor. Residues asparagine 257 and aspartate 266 each coordinate Mg(2+). Aspartate 266 provides a ligand contact to ATP.

Belongs to the SELO family. Mg(2+) serves as cofactor. Requires Mn(2+) as cofactor.

It carries out the reaction L-seryl-[protein] + ATP = 3-O-(5'-adenylyl)-L-seryl-[protein] + diphosphate. The catalysed reaction is L-threonyl-[protein] + ATP = 3-O-(5'-adenylyl)-L-threonyl-[protein] + diphosphate. It catalyses the reaction L-tyrosyl-[protein] + ATP = O-(5'-adenylyl)-L-tyrosyl-[protein] + diphosphate. The enzyme catalyses L-histidyl-[protein] + UTP = N(tele)-(5'-uridylyl)-L-histidyl-[protein] + diphosphate. It carries out the reaction L-seryl-[protein] + UTP = O-(5'-uridylyl)-L-seryl-[protein] + diphosphate. The catalysed reaction is L-tyrosyl-[protein] + UTP = O-(5'-uridylyl)-L-tyrosyl-[protein] + diphosphate. In terms of biological role, nucleotidyltransferase involved in the post-translational modification of proteins. It can catalyze the addition of adenosine monophosphate (AMP) or uridine monophosphate (UMP) to a protein, resulting in modifications known as AMPylation and UMPylation. The protein is Protein nucleotidyltransferase YdiU of Corynebacterium glutamicum (strain R).